A 425-amino-acid polypeptide reads, in one-letter code: uncharacterized protein (425 aa).

Positions 55–181 (RYSHSLGVYE…DLDADRMDYL (127 aa)) constitute an HD domain.

This is an uncharacterized protein from Mycoplasma pneumoniae (strain ATCC 29342 / M129 / Subtype 1) (Mycoplasmoides pneumoniae).